Reading from the N-terminus, the 353-residue chain is Elongation factor Ts (353 aa).

The interval 80-83 (TDFV) is involved in Mg(2+) ion dislocation from EF-Tu.

It belongs to the EF-Ts family.

It is found in the cytoplasm. Its function is as follows. Associates with the EF-Tu.GDP complex and induces the exchange of GDP to GTP. It remains bound to the aminoacyl-tRNA.EF-Tu.GTP complex up to the GTP hydrolysis stage on the ribosome. This chain is Elongation factor Ts, found in Sulfurovum sp. (strain NBC37-1).